A 675-amino-acid polypeptide reads, in one-letter code: DNA ligase 1 (675 aa).

Residues 34 to 38, 83 to 84, and E114 contribute to the NAD(+) site; these read DFEYD and SL. The active-site N6-AMP-lysine intermediate is K116. NAD(+) is bound by residues R137, E177, K295, and K319. Zn(2+)-binding residues include C413, C416, C431, and C436. The BRCT domain occupies 596 to 675; that stretch reads NSGSALAGKT…AEFLRLLSGG (80 aa).

This sequence belongs to the NAD-dependent DNA ligase family. LigA subfamily. Requires Mg(2+) as cofactor. It depends on Mn(2+) as a cofactor.

It carries out the reaction NAD(+) + (deoxyribonucleotide)n-3'-hydroxyl + 5'-phospho-(deoxyribonucleotide)m = (deoxyribonucleotide)n+m + AMP + beta-nicotinamide D-nucleotide.. Functionally, DNA ligase that catalyzes the formation of phosphodiester linkages between 5'-phosphoryl and 3'-hydroxyl groups in double-stranded DNA using NAD as a coenzyme and as the energy source for the reaction. It is essential for DNA replication and repair of damaged DNA. The chain is DNA ligase 1 from Opitutus terrae (strain DSM 11246 / JCM 15787 / PB90-1).